Here is a 357-residue protein sequence, read N- to C-terminus: Protein ORF58 (357 aa).

Transmembrane regions (helical) follow at residues 20–40, 44–64, 78–98, 101–121, 132–152, 157–177, 219–239, 242–262, 270–290, 300–320, and 333–353; these read LAAT…FTLF, ITAV…CMCL, WICA…GFTF, VPFI…YPLA, IVHR…YLLL, FVSG…LLAF, VVVF…IGLL, VLIG…SCVG, ALFV…ILGS, CLCC…IQLI, and MVLA…SVIN.

The protein belongs to the herpesviridae BMRF2 family.

It localises to the virion membrane. The protein resides in the host cell membrane. Its function is as follows. Participates in rearrangement of cellular actin to increase intercellular contacts and thereby promotes virus cell-to-cell spreadin$g. This is Protein ORF58 (ORF58) from Homo sapiens (Human).